Reading from the N-terminus, the 105-residue chain is MANRIKKGDQVVINTGKDKGKQGEVVRVEGDRVIVSNANVIKRHTKPNPQAGVAGGVVEREASIHISNVNIVNPATGKGERVGFKVLEDGRKLRVFRSSGEALDA.

This sequence belongs to the universal ribosomal protein uL24 family. In terms of assembly, part of the 50S ribosomal subunit.

In terms of biological role, one of two assembly initiator proteins, it binds directly to the 5'-end of the 23S rRNA, where it nucleates assembly of the 50S subunit. Functionally, one of the proteins that surrounds the polypeptide exit tunnel on the outside of the subunit. The chain is Large ribosomal subunit protein uL24 from Xanthomonas campestris pv. campestris (strain 8004).